The following is a 97-amino-acid chain: Putative membrane protein insertion efficiency factor (97 aa).

Belongs to the UPF0161 family.

The protein resides in the cell membrane. Its function is as follows. Could be involved in insertion of integral membrane proteins into the membrane. The chain is Putative membrane protein insertion efficiency factor from Lactobacillus helveticus (strain DPC 4571).